The following is a 719-amino-acid chain: Ferric reductase transmembrane component 4 (719 aa).

An N-terminal signal peptide occupies residues 1–18 (MLLVHIISFLLFFQLSAA). Topologically, residues 19–156 (KAPPSKTSLI…YGYYYNHDIP (138 aa)) are extracellular. N-linked (GlcNAc...) asparagine glycans are attached at residues N51, N80, N101, N113, N127, and N135. Residues 157–177 (YYFGGIICAYFVGVMLLAGLI) traverse the membrane as a helical segment. Residues 178–228 (RFLNYTPIKKIMFQQKLVNYVRGYTTLPTLYEKHAEPFSYLKVITGYLPTR) lie on the Cytoplasmic side of the membrane. The helical transmembrane segment at 229–249 (FETLVILGYLILHTIFMAYKY) threads the bilayer. Residues 250 to 267 (QYDPYHIIFAAHRAEVAH) are Extracellular-facing. Residues 268-288 (FVAYRSGILSFAHLPLIVLFA) traverse the membrane as a helical segment. One can recognise a Ferric oxidoreductase domain in the interval 273-407 (SGILSFAHLP…SGIEWIYAAI (135 aa)). Residues 289 to 304 (GRNNFLQLISGLKHTS) are Cytoplasmic-facing. Residues 305–325 (FIVFHKWLGRMMFLDAIIHAA) traverse the membrane as a helical segment. 2 residues coordinate heme: H309 and H323. Residues 326 to 346 (GFTNYYLYYKKWNTVRLRVYW) are Extracellular-facing. A helical membrane pass occupies residues 347-367 (KFGIATTCLAGMLIFFSIAAF). Over 368–373 (RRHYYE) the chain is Cytoplasmic. The helical transmembrane segment at 374 to 394 (TFMALHIVFAALFLYTCWEHV) threads the bilayer. Heme-binding residues include H379 and H393. A topological domain (extracellular) is located at residue T395. A helical membrane pass occupies residues 396–416 (NFSGIEWIYAAIAIWGVDRIV). In terms of domain architecture, FAD-binding FR-type spans 408–527 (AIWGVDRIVR…EGPYGSKSTA (120 aa)). Over 417-719 (RITRIALLGF…IEYLEEYQAW (303 aa)) the chain is Cytoplasmic. 472–478 (HPFTVMD) provides a ligand contact to FAD. 519–522 (GPYG) contributes to the NADP(+) binding site. Composition is skewed to polar residues over residues 606-618 (EKISSNEVKNGET) and 625-643 (SSLSNSEKAPSESENTELP). The interval 606–643 (EKISSNEVKNGETTAEKAPSSLSNSEKAPSESENTELP) is disordered. 685–686 (CG) contributes to the NADP(+) binding site.

The protein belongs to the ferric reductase (FRE) family. FAD is required as a cofactor.

The protein resides in the cell membrane. The enzyme catalyses 2 a Fe(II)-siderophore + NADP(+) + H(+) = 2 a Fe(III)-siderophore + NADPH. Siderophore-iron reductase responsible for reducing extracellular iron prior to import. Catalyzes the reductive uptake of Fe(3+) bound to dihydroxamate rhodotorulic acid. Fe(3+) is reduced to Fe(2+), which then dissociates from the siderophore and can be imported by the high-affinity Fe(2+) transport complex in the plasma membrane. In Saccharomyces cerevisiae (strain ATCC 204508 / S288c) (Baker's yeast), this protein is Ferric reductase transmembrane component 4 (FRE4).